The sequence spans 81 residues: Small ribosomal subunit protein bS18 (81 aa).

Belongs to the bacterial ribosomal protein bS18 family. As to quaternary structure, part of the 30S ribosomal subunit. Forms a tight heterodimer with protein bS6.

In terms of biological role, binds as a heterodimer with protein bS6 to the central domain of the 16S rRNA, where it helps stabilize the platform of the 30S subunit. This Syntrophobacter fumaroxidans (strain DSM 10017 / MPOB) protein is Small ribosomal subunit protein bS18.